The chain runs to 583 residues: Laminarase-resistance protein LRE1 (583 aa).

Positions 1–24 (MPNTHTQHVQISEPNPVNTLSTPS) are enriched in polar residues. Disordered stretches follow at residues 1-31 (MPNTHTQHVQISEPNPVNTLSTPSKRGHRHR) and 330-380 (LKDN…HMQH). Composition is skewed to basic and acidic residues over residues 332–342 (DNPRYAKDGYP) and 354–366 (LDSDKRQDFSGES). A phosphoserine mark is found at serine 393 and serine 398. A disordered region spans residues 457–486 (SCTPDGKEEMNRLKSNDSNEYSKSEGQIRT). Over residues 461-479 (DGKEEMNRLKSNDSNEYSK) the composition is skewed to basic and acidic residues. 2 positions are modified to phosphoserine: serine 516 and serine 552.

In terms of processing, phosphorylated by CDC28/CDK1.

In terms of biological role, overexpression affects chitinase expression, cell separation and budding pattern, and increases trehalose accumulation and heat resistance by inhibiting protein kinase CBK1. Overexpression also suppresses temperature-induced hyperosmosensitivity and sensitivity to cell wall degrading enzymes. Overexpression of both LRE1 and PBN1 confers resistance to laminarinase. The protein is Laminarase-resistance protein LRE1 (LRE1) of Saccharomyces cerevisiae (strain ATCC 204508 / S288c) (Baker's yeast).